The primary structure comprises 157 residues: MAPLEAPILAIPGENNTHQQQQQQFQYTGQLQKKKAAEGSIEWYFDQTINFMGDHPVITGIGAFAVAYFAAGFIKSNQPGINGKAFVKGGFGAKMTAKEALQILNLKETNLSKLKLKEQHRKLMMANHPDKGGSSYIATKINEAKDFLDKRGGMKPK.

The Mitochondrial intermembrane segment spans residues 1–56; it reads MAPLEAPILAIPGENNTHQQQQQQFQYTGQLQKKKAAEGSIEWYFDQTINFMGDHP. Residues 57–74 form a helical membrane-spanning segment; sequence VITGIGAFAVAYFAAGFI. Topologically, residues 75–157 are mitochondrial matrix; it reads KSNQPGINGK…LDKRGGMKPK (83 aa). The 59-residue stretch at 99–157 folds into the J domain; that stretch reads EALQILNLKETNLSKLKLKEQHRKLMMANHPDKGGSSYIATKINEAKDFLDKRGGMKPK.

It belongs to the TIM14 family. As to quaternary structure, heterodimer with PAM16. Component of the PAM complex, at least composed of mtHsp70, MGE1, TIM44, PAM16, PAM17 and PAM18.

The protein localises to the mitochondrion inner membrane. In terms of biological role, essential component of the PAM complex, a complex required for the translocation of transit peptide-containing proteins from the inner membrane into the mitochondrial matrix in an ATP-dependent manner. In the complex, it is required to stimulate activity of mtHSP70 (SSC1). This is Mitochondrial import inner membrane translocase subunit TIM14 (PAM18) from Candida albicans (strain SC5314 / ATCC MYA-2876) (Yeast).